A 122-amino-acid chain; its full sequence is Putative ankyrin repeat protein L22 (122 aa).

ANK repeat units follow at residues 3-32 (DNNY…DIKA), 33-62 (DDDY…DIRV), 63-92 (NNDY…NIRA), and 94-122 (DDYA…VLNQ).

The sequence is that of Putative ankyrin repeat protein L22 from Acanthamoeba polyphaga (Amoeba).